The primary structure comprises 464 residues: Methionine aminopeptidase 2 (464 aa).

Positions Met-1–Glu-86 are disordered. Residues Gly-43–Asp-54 show a composition bias toward acidic residues. Residues Lys-72 to Asn-83 show a composition bias toward basic residues. His-216 is a substrate binding site. A divalent metal cation contacts are provided by Asp-237, Asp-248, and His-317. A substrate-binding site is contributed by His-325. The a divalent metal cation site is built by Glu-350 and Glu-445.

It belongs to the peptidase M24A family. Methionine aminopeptidase eukaryotic type 2 subfamily. Requires Co(2+) as cofactor. Zn(2+) serves as cofactor. Mn(2+) is required as a cofactor. It depends on Fe(2+) as a cofactor.

Its subcellular location is the cytoplasm. The enzyme catalyses Release of N-terminal amino acids, preferentially methionine, from peptides and arylamides.. In terms of biological role, cotranslationally removes the N-terminal methionine from nascent proteins. The N-terminal methionine is often cleaved when the second residue in the primary sequence is small and uncharged (Met-Ala-, Cys, Gly, Pro, Ser, Thr, or Val). This is Methionine aminopeptidase 2 from Ajellomyces capsulatus (strain NAm1 / WU24) (Darling's disease fungus).